Reading from the N-terminus, the 289-residue chain is Dermonecrotic toxin LarSicTox-betaID1 (289 aa).

A signal peptide spans 1–2 (EG). A propeptide spanning residues 3-11 (AEQDGSERT) is cleaved from the precursor. Residue His-22 is part of the active site. Mg(2+) is bound by residues Glu-42 and Asp-44. His-58 (nucleophile) is an active-site residue. Cystine bridges form between Cys-62-Cys-68 and Cys-64-Cys-207. Position 102 (Asp-102) interacts with Mg(2+).

The protein belongs to the arthropod phospholipase D family. Class II subfamily. Mg(2+) serves as cofactor. As to expression, expressed by the venom gland.

The protein resides in the secreted. It carries out the reaction an N-(acyl)-sphingosylphosphocholine = an N-(acyl)-sphingosyl-1,3-cyclic phosphate + choline. The catalysed reaction is N-hexanoyl-sphing-4-enine-1-phosphocholine = N-(hexanoyl)-sphing-4-enine-1,3-cyclic phosphate + choline. It catalyses the reaction N-(dodecanoyl)-sphing-4-enine-1-phosphocholine = N-dodecanoyl-sphing-4-enine-1,3-cyclic phosphate + choline. The enzyme catalyses an N-(acyl)-sphingosylphosphoethanolamine = an N-(acyl)-sphingosyl-1,3-cyclic phosphate + ethanolamine. It carries out the reaction N-dodecanoyl-heptadecasphing-4-enine-1-phosphoethanolamine = N-dodecanoyl-heptadecasphing-4-enine-1,3-cyclic phosphate + ethanolamine. The catalysed reaction is a 1-acyl-sn-glycero-3-phosphocholine = a 1-acyl-sn-glycero-2,3-cyclic phosphate + choline. It catalyses the reaction 1-tetradecanoyl-sn-glycero-3-phosphocholine = 1-tetradecanoyl-sn-glycero-2,3-cyclic phosphate + choline. The enzyme catalyses 1-octanoyl-sn-glycero-3-phosphocholine = 1-octanoyl-sn-glycero-2,3-cyclic phosphate + choline. It carries out the reaction a 1-acyl-sn-glycero-3-phosphoethanolamine = a 1-acyl-sn-glycero-2,3-cyclic phosphate + ethanolamine. The catalysed reaction is 1-tetradecanoyl-sn-glycero-3-phosphoethanolamine = 1-tetradecanoyl-sn-glycero-2,3-cyclic phosphate + ethanolamine. Its function is as follows. Dermonecrotic toxins cleave the phosphodiester linkage between the phosphate and headgroup of certain phospholipids (sphingolipid and lysolipid substrates), forming an alcohol (often choline) and a cyclic phosphate. This toxin acts on sphingomyelin (SM) and on ceramide phosphoethanolamine (CPE) with high activity. It also acts on lysophosphatidylcholine (LPC) and on lysophosphatidylethanolamine (LPE) with moderate activity. It is not active on lysophosphatidylserine (LPS), and lysophosphatidylglycerol (LPG). It acts by transphosphatidylation, releasing exclusively cyclic phosphate as second products. It is not surprising that spider toxins have affinity for ethanolamine-containing sphingolipids since they are common in insect prey. On mammals, induces dermonecrosis, hemolysis, increased vascular permeability, edema, inflammatory response, and platelet aggregation. This Loxosceles arizonica (Arizona brown spider) protein is Dermonecrotic toxin LarSicTox-betaID1.